The chain runs to 34 residues: Photosystem II reaction center protein Psb30 (34 aa).

A helical membrane pass occupies residues 7 to 27 (VAQLLALFVIITSGPAIIILI).

Belongs to the Psb30/Ycf12 family. In terms of assembly, PSII is composed of 1 copy each of membrane proteins PsbA, PsbB, PsbC, PsbD, PsbE, PsbF, PsbH, PsbI, PsbJ, PsbK, PsbL, PsbM, PsbT, PsbX, PsbY, PsbZ, Psb30/Ycf12, peripheral proteins of the oxygen-evolving complex and a large number of cofactors. It forms dimeric complexes.

The protein resides in the plastid. Its subcellular location is the chloroplast thylakoid membrane. Its function is as follows. A core subunit of photosystem II (PSII), probably helps stabilize the reaction center. The protein is Photosystem II reaction center protein Psb30 of Guillardia theta (Cryptophyte).